Here is a 747-residue protein sequence, read N- to C-terminus: Elastin (747 aa).

A signal peptide spans 1-26 (MRSLTAAARRPEVLLLLLCILQPSQP). 4-hydroxyproline occurs at positions 34, 65, and 87. Allysine is present on residues K105 and K109. P165, P178, and P181 each carry 4-hydroxyproline. P188 is subject to Hydroxyproline. 4-hydroxyproline is present on P201. Allysine occurs at positions 252, 271, and 275. A 4-hydroxyproline mark is found at P298 and P302. 2 positions are modified to allysine: K324 and K327. 4-hydroxyproline occurs at positions 335, 365, 370, 375, 380, and 385. K400, K404, K407, K445, and K448 each carry allysine. 2 positions are modified to 4-hydroxyproline: P462 and P478. An allysine mark is found at K489 and K493. P513 is subject to 4-hydroxyproline. Residues K544, K548, and K552 each carry the allysine modification. 4-hydroxyproline occurs at positions 566, 575, 584, 593, and 599. Allysine is present on residues K606 and K609. P630 is subject to 4-hydroxyproline. An allysine mark is found at K645, K649, K685, and K688. 4-hydroxyproline is present on residues P719 and P733. Cysteines 737 and 742 form a disulfide.

This sequence belongs to the elastin family. As to quaternary structure, the polymeric elastin chains are cross-linked together into an extensible 3D network. Forms a ternary complex with BGN and MFAP2. Interacts with MFAP2 via divalent cations (calcium &gt; magnesium &gt; manganese) in a dose-dependent and saturating manner. Interacts with FBLN5 and FBN1. Forms a ternary complex with FBN1 and FBLN2 or FBLN5. Interacts with MFAP4 in a Ca (2+)-dependent manner; this interaction promotes ELN self-assembly. Interacts with EFEMP2 with moderate affinity. Post-translationally, elastin is formed through the cross-linking of its soluble precursor tropoelastin. Cross-linking is initiated through the action of lysyl oxidase on exposed lysines to form allysine. Subsequent spontaneous condensation reactions with other allysine or unmodified lysine residues result in various bi-, tri-, and tetrafunctional cross-links. The most abundant cross-links in mature elastin fibers are lysinonorleucine, allysine aldol, desmosine, and isodesmosine. In terms of processing, hydroxylation on proline residues within the sequence motif, GXPG, is most likely to be 4-hydroxy as this fits the requirement for 4-hydroxylation in vertebrates.

The protein resides in the secreted. Its subcellular location is the extracellular space. It is found in the extracellular matrix. Its function is as follows. Major structural protein of tissues such as aorta and nuchal ligament, which must expand rapidly and recover completely. Molecular determinant of the late arterial morphogenesis, stabilizing arterial structure by regulating proliferation and organization of vascular smooth muscle. This chain is Elastin (ELN), found in Bos taurus (Bovine).